The primary structure comprises 211 residues: Arginine exporter protein ArgO (211 aa).

6 helical membrane-spanning segments follow: residues 1–21 (MFTY…PLGP), 37–57 (LMIA…GIFG), 68–88 (LLAL…FGAL), 111–131 (IIIT…DTFV), 147–167 (WFAL…ALLA), and 179–199 (AQRI…FQLA).

It belongs to the LysE/ArgO transporter (TC 2.A.75) family.

It is found in the cell inner membrane. It carries out the reaction L-arginine(in) = L-arginine(out). Involved in the export of arginine. Important to control the intracellular level of arginine and the correct balance between arginine and lysine. This is Arginine exporter protein ArgO from Klebsiella pneumoniae subsp. pneumoniae (strain ATCC 700721 / MGH 78578).